We begin with the raw amino-acid sequence, 254 residues long: Axonemal dynein light intermediate polypeptide 1 (254 aa).

A disordered region spans residues 1–55 (MIPPADSLLKHDNPVLISKNTERKSPKSRPLKVSSPQTVLTAPVPPPPKPKTPLL). The stretch at 175–245 (ALQAEQGKSD…KRTNQQLKAQ (71 aa)) forms a coiled coil.

It belongs to the inner dynein arm light chain family.

It is found in the cell projection. Its subcellular location is the cilium. The protein resides in the flagellum. It localises to the dynein axonemal particle. The protein localises to the cytoplasm. Involved in sperm flagellum assembly. The protein is Axonemal dynein light intermediate polypeptide 1 of Xenopus laevis (African clawed frog).